The sequence spans 310 residues: Ribosomal RNA small subunit methyltransferase H (310 aa).

S-adenosyl-L-methionine contacts are provided by residues 35-37, D52, F79, D100, and Q107; that span reads GGH.

This sequence belongs to the methyltransferase superfamily. RsmH family.

It is found in the cytoplasm. The catalysed reaction is cytidine(1402) in 16S rRNA + S-adenosyl-L-methionine = N(4)-methylcytidine(1402) in 16S rRNA + S-adenosyl-L-homocysteine + H(+). Functionally, specifically methylates the N4 position of cytidine in position 1402 (C1402) of 16S rRNA. This Anaeromyxobacter sp. (strain K) protein is Ribosomal RNA small subunit methyltransferase H.